The chain runs to 489 residues: Rhamnulokinase (489 aa).

Alanine 13–arginine 17 serves as a coordination point for ATP. A disulfide bond links cysteine 68 and cysteine 222. Residues glycine 83 and histidine 236–threonine 238 each bind substrate. Residue aspartate 237 is the Proton acceptor of the active site. Threonine 259 serves as a coordination point for ATP. Asparagine 296 contacts substrate. Glutamine 304 contacts ATP. Cysteine 353 and cysteine 370 are joined by a disulfide. Glycine 402 provides a ligand contact to ATP. A disulfide bridge connects residues cysteine 413 and cysteine 417.

This sequence belongs to the rhamnulokinase family. Monomer. Mg(2+) serves as cofactor.

It carries out the reaction L-rhamnulose + ATP = L-rhamnulose 1-phosphate + ADP + H(+). Its pathway is carbohydrate degradation; L-rhamnose degradation; glycerone phosphate from L-rhamnose: step 2/3. Its function is as follows. Involved in the catabolism of L-rhamnose (6-deoxy-L-mannose). Catalyzes the transfer of the gamma-phosphate group from ATP to the 1-hydroxyl group of L-rhamnulose to yield L-rhamnulose 1-phosphate. This Escherichia coli O157:H7 protein is Rhamnulokinase.